A 700-amino-acid chain; its full sequence is Receptor-type tyrosine-protein phosphatase epsilon (700 aa).

Positions 1–19 are cleaved as a signal peptide; it reads MEPLCPLLLVGFSLPLARA. Residues 20-46 are Extracellular-facing; that stretch reads LRGNETTADSNETTTTSGPPDPGASQP. 2 N-linked (GlcNAc...) asparagine glycosylation sites follow: Asn23 and Asn30. The helical transmembrane segment at 47 to 69 threads the bilayer; that stretch reads LLAWLLLPLLLLLLVLLLAAYFF. Residues 70 to 700 are Cytoplasmic-facing; it reads RFRKQRKAVV…DIFSDYANFK (631 aa). 2 Tyrosine-protein phosphatase domains span residues 135 to 394 and 426 to 689; these read FREE…LLEY and LEEE…VQDF. Residues Asp303, 335–341, and Gln379 contribute to the substrate site; that span reads CSAGVGR. The active-site Phosphocysteine intermediate is Cys335. Cys630 acts as the Phosphocysteine intermediate in catalysis. Tyr696 is subject to Phosphotyrosine.

This sequence belongs to the protein-tyrosine phosphatase family. Receptor class 4 subfamily. Monomer. Isoform 2: Homodimer. Can form oligomers. Dimerization is increased by oxidative stress and decreased by EGFR. Isoform 2 interacts with GRB2. Post-translationally, a catalytically active cytoplasmic form (p65) is produced by proteolytic cleavage of either isoform 1, isoform 2 or isoform 3. Isoform 1 and isoform 2 are phosphorylated on tyrosine residues by tyrosine kinase Neu. In terms of processing, isoform 1 is glycosylated. As to expression, expressed in giant cell tumor (osteoclastoma rich in multinucleated osteoclastic cells).

The protein resides in the cell membrane. The protein localises to the cytoplasm. The catalysed reaction is O-phospho-L-tyrosyl-[protein] + H2O = L-tyrosyl-[protein] + phosphate. Isoform 1 plays a critical role in signaling transduction pathways and phosphoprotein network topology in red blood cells. May play a role in osteoclast formation and function. Its function is as follows. Isoform 2 acts as a negative regulator of insulin receptor (IR) signaling in skeletal muscle. Regulates insulin-induced tyrosine phosphorylation of insulin receptor (IR) and insulin receptor substrate 1 (IRS-1), phosphorylation of protein kinase B and glycogen synthase kinase-3 and insulin induced stimulation of glucose uptake. Functionally, isoform 1 and isoform 2 act as a negative regulator of FceRI-mediated signal transduction leading to cytokine production and degranulation, most likely by acting at the level of SYK to affect downstream events such as phosphorylation of SLP76 and LAT and mobilization of Ca(2+). This is Receptor-type tyrosine-protein phosphatase epsilon (PTPRE) from Homo sapiens (Human).